The sequence spans 473 residues: Ribulose bisphosphate carboxylase large chain (473 aa).

Lys8 is subject to N6,N6,N6-trimethyllysine. Substrate contacts are provided by Asn117 and Thr167. Residue Lys169 is the Proton acceptor of the active site. Lys171 lines the substrate pocket. Residues Lys195, Asp197, and Glu198 each contribute to the Mg(2+) site. The residue at position 195 (Lys195) is an N6-carboxylysine. Residue His288 is the Proton acceptor of the active site. Arg289, His321, and Ser373 together coordinate substrate.

This sequence belongs to the RuBisCO large chain family. Type I subfamily. In terms of assembly, heterohexadecamer of 8 large chains and 8 small chains; disulfide-linked. The disulfide link is formed within the large subunit homodimers. Mg(2+) serves as cofactor. In terms of processing, the disulfide bond which can form in the large chain dimeric partners within the hexadecamer appears to be associated with oxidative stress and protein turnover.

It is found in the plastid. The protein localises to the chloroplast. The catalysed reaction is 2 (2R)-3-phosphoglycerate + 2 H(+) = D-ribulose 1,5-bisphosphate + CO2 + H2O. It catalyses the reaction D-ribulose 1,5-bisphosphate + O2 = 2-phosphoglycolate + (2R)-3-phosphoglycerate + 2 H(+). Functionally, ruBisCO catalyzes two reactions: the carboxylation of D-ribulose 1,5-bisphosphate, the primary event in carbon dioxide fixation, as well as the oxidative fragmentation of the pentose substrate in the photorespiration process. Both reactions occur simultaneously and in competition at the same active site. The sequence is that of Ribulose bisphosphate carboxylase large chain from Amorphophallus titanum (Titan arum).